Here is a 286-residue protein sequence, read N- to C-terminus: Putative ribosome-inactivating protein (286 aa).

A signal peptide spans 1–21 (MNRFSVLMCLVILSIFHGVPT). N-linked (GlcNAc...) asparagine glycans are attached at residues Asn-103 and Asn-110. The active site involves Glu-185. Asn-252 is a glycosylation site (N-linked (GlcNAc...) asparagine).

The protein belongs to the ribosome-inactivating protein family. Type 1 RIP subfamily.

It carries out the reaction Endohydrolysis of the N-glycosidic bond at one specific adenosine on the 28S rRNA.. The polypeptide is Putative ribosome-inactivating protein (Cucumis ficifolius (Cucumis figarei)).